The following is a 173-amino-acid chain: Crossover junction endodeoxyribonuclease RuvC (173 aa).

Active-site residues include aspartate 8, glutamate 67, and aspartate 139. Positions 8, 67, and 139 each coordinate Mg(2+).

Belongs to the RuvC family. As to quaternary structure, homodimer which binds Holliday junction (HJ) DNA. The HJ becomes 2-fold symmetrical on binding to RuvC with unstacked arms; it has a different conformation from HJ DNA in complex with RuvA. In the full resolvosome a probable DNA-RuvA(4)-RuvB(12)-RuvC(2) complex forms which resolves the HJ. Mg(2+) serves as cofactor.

The protein resides in the cytoplasm. It carries out the reaction Endonucleolytic cleavage at a junction such as a reciprocal single-stranded crossover between two homologous DNA duplexes (Holliday junction).. In terms of biological role, the RuvA-RuvB-RuvC complex processes Holliday junction (HJ) DNA during genetic recombination and DNA repair. Endonuclease that resolves HJ intermediates. Cleaves cruciform DNA by making single-stranded nicks across the HJ at symmetrical positions within the homologous arms, yielding a 5'-phosphate and a 3'-hydroxyl group; requires a central core of homology in the junction. The consensus cleavage sequence is 5'-(A/T)TT(C/G)-3'. Cleavage occurs on the 3'-side of the TT dinucleotide at the point of strand exchange. HJ branch migration catalyzed by RuvA-RuvB allows RuvC to scan DNA until it finds its consensus sequence, where it cleaves and resolves the cruciform DNA. This is Crossover junction endodeoxyribonuclease RuvC from Sodalis glossinidius (strain morsitans).